We begin with the raw amino-acid sequence, 236 residues long: 15,16-dihydrobiliverdin:ferredoxin oxidoreductase (236 aa).

The protein belongs to the HY2 family.

It carries out the reaction 15,16-dihydrobiliverdin + oxidized 2[4Fe-4S]-[ferredoxin] = biliverdin IXalpha + reduced 2[4Fe-4S]-[ferredoxin] + 2 H(+). Catalyzes the two-electron reduction of biliverdin IX-alpha at the C15 methine bridge. This chain is 15,16-dihydrobiliverdin:ferredoxin oxidoreductase, found in Prochlorococcus marinus (strain AS9601).